Here is a 309-residue protein sequence, read N- to C-terminus: ADP-L-glycero-D-manno-heptose-6-epimerase (309 aa).

NADP(+)-binding positions include 10 to 11 (MI), 31 to 32 (DN), Lys38, Lys53, 75 to 79 (EGACS), and Asn92. Tyr139 serves as the catalytic Proton acceptor. Lys143 contacts NADP(+). Asn168 provides a ligand contact to substrate. NADP(+)-binding residues include Val169 and Lys177. The Proton acceptor role is filled by Lys177. Substrate-binding positions include Ser179, His186, 200-203 (FDGS), Arg208, and Tyr271.

Belongs to the NAD(P)-dependent epimerase/dehydratase family. HldD subfamily. In terms of assembly, homopentamer. NADP(+) serves as cofactor.

It carries out the reaction ADP-D-glycero-beta-D-manno-heptose = ADP-L-glycero-beta-D-manno-heptose. Its pathway is nucleotide-sugar biosynthesis; ADP-L-glycero-beta-D-manno-heptose biosynthesis; ADP-L-glycero-beta-D-manno-heptose from D-glycero-beta-D-manno-heptose 7-phosphate: step 4/4. In terms of biological role, catalyzes the interconversion between ADP-D-glycero-beta-D-manno-heptose and ADP-L-glycero-beta-D-manno-heptose via an epimerization at carbon 6 of the heptose. The chain is ADP-L-glycero-D-manno-heptose-6-epimerase from Serratia proteamaculans (strain 568).